The following is a 308-amino-acid chain: Transcription initiation factor IIB (308 aa).

2 consecutive repeat copies span residues 124 to 207 (NELE…LREL) and 218 to 299 (DYVT…ELTQ).

The protein belongs to the TFIIB family.

Functionally, stabilizes TBP binding to an archaeal box-A promoter. Also responsible for recruiting RNA polymerase II to the pre-initiation complex (DNA-TBP-TFIIB). The protein is Transcription initiation factor IIB of Sulfurisphaera tokodaii (strain DSM 16993 / JCM 10545 / NBRC 100140 / 7) (Sulfolobus tokodaii).